Consider the following 804-residue polypeptide: Protein-lysine N-methyltransferase SMYD4 (804 aa).

112–114 contributes to the S-adenosyl-L-methionine binding site; the sequence is RSA. The SET domain occupies 233-574; that stretch reads SSIGLCVDPL…KGQEILHCYG (342 aa). Zn(2+) is bound by residues Cys296, Cys299, Cys309, Cys312, Cys318, Cys322, His331, and Cys335. The segment at 296–335 adopts an MYND-type zinc-finger fold; it reads CHRCLKHTLATVPCDGCSYAKYCSQECLQQAWELYHRTEC. S-adenosyl-L-methionine-binding positions include Asn427, 539–540, Tyr573, and Phe595; that span reads NH.

Belongs to the class V-like SAM-binding methyltransferase superfamily. Interacts (via MYND-type zinc finger) with HDAC1.

It is found in the nucleus. The protein resides in the cytoplasm. It carries out the reaction L-lysyl-[protein] + S-adenosyl-L-methionine = N(6)-methyl-L-lysyl-[protein] + S-adenosyl-L-homocysteine + H(+). Protein-lysine N-methyltransferase. Monomethylates PRMT5, modulating its transcriptional activity. May also act as a histone methyltransferase. Plays a critical role in cardiac development. Acts as a key epigenetic regulator of gene expression during cardiac development via its dual activities as a methyltransferase and negative regulator of HDAC1. The chain is Protein-lysine N-methyltransferase SMYD4 from Homo sapiens (Human).